Consider the following 666-residue polypeptide: DNA mismatch repair protein MutL (666 aa).

This sequence belongs to the DNA mismatch repair MutL/HexB family.

Its function is as follows. This protein is involved in the repair of mismatches in DNA. It is required for dam-dependent methyl-directed DNA mismatch repair. May act as a 'molecular matchmaker', a protein that promotes the formation of a stable complex between two or more DNA-binding proteins in an ATP-dependent manner without itself being part of a final effector complex. This chain is DNA mismatch repair protein MutL, found in Clostridium botulinum (strain Okra / Type B1).